Reading from the N-terminus, the 510-residue chain is ATP synthase subunit alpha (510 aa).

ATP is bound at residue 169–176 (GDRQTGKT).

This sequence belongs to the ATPase alpha/beta chains family. As to quaternary structure, F-type ATPases have 2 components, CF(1) - the catalytic core - and CF(0) - the membrane proton channel. CF(1) has five subunits: alpha(3), beta(3), gamma(1), delta(1), epsilon(1). CF(0) has three main subunits: a(1), b(2) and c(9-12). The alpha and beta chains form an alternating ring which encloses part of the gamma chain. CF(1) is attached to CF(0) by a central stalk formed by the gamma and epsilon chains, while a peripheral stalk is formed by the delta and b chains.

The protein localises to the cell inner membrane. It catalyses the reaction ATP + H2O + 4 H(+)(in) = ADP + phosphate + 5 H(+)(out). In terms of biological role, produces ATP from ADP in the presence of a proton gradient across the membrane. The alpha chain is a regulatory subunit. In Rickettsia felis (strain ATCC VR-1525 / URRWXCal2) (Rickettsia azadi), this protein is ATP synthase subunit alpha.